A 338-amino-acid chain; its full sequence is Ketol-acid reductoisomerase (NADP(+)) (338 aa).

One can recognise a KARI N-terminal Rossmann domain in the interval 1 to 181; it reads MKVYYDKDAD…GGTRGGVIET (181 aa). NADP(+) is bound by residues 24 to 27, arginine 47, and serine 52; that span reads YGSQ. The active site involves histidine 107. NADP(+) is bound at residue glycine 133. In terms of domain architecture, KARI C-terminal knotted spans 182 to 327; the sequence is TFKEETETDL…AKLRDMMPWI (146 aa). Mg(2+)-binding residues include aspartate 190, glutamate 194, glutamate 226, and glutamate 230. Substrate is bound at residue serine 251.

Belongs to the ketol-acid reductoisomerase family. Mg(2+) is required as a cofactor.

The enzyme catalyses (2R)-2,3-dihydroxy-3-methylbutanoate + NADP(+) = (2S)-2-acetolactate + NADPH + H(+). It carries out the reaction (2R,3R)-2,3-dihydroxy-3-methylpentanoate + NADP(+) = (S)-2-ethyl-2-hydroxy-3-oxobutanoate + NADPH + H(+). Its pathway is amino-acid biosynthesis; L-isoleucine biosynthesis; L-isoleucine from 2-oxobutanoate: step 2/4. The protein operates within amino-acid biosynthesis; L-valine biosynthesis; L-valine from pyruvate: step 2/4. In terms of biological role, involved in the biosynthesis of branched-chain amino acids (BCAA). Catalyzes an alkyl-migration followed by a ketol-acid reduction of (S)-2-acetolactate (S2AL) to yield (R)-2,3-dihydroxy-isovalerate. In the isomerase reaction, S2AL is rearranged via a Mg-dependent methyl migration to produce 3-hydroxy-3-methyl-2-ketobutyrate (HMKB). In the reductase reaction, this 2-ketoacid undergoes a metal-dependent reduction by NADPH to yield (R)-2,3-dihydroxy-isovalerate. The polypeptide is Ketol-acid reductoisomerase (NADP(+)) (Nitrosomonas europaea (strain ATCC 19718 / CIP 103999 / KCTC 2705 / NBRC 14298)).